We begin with the raw amino-acid sequence, 142 residues long: Nucleoside diphosphate kinase (142 aa).

K11, F59, R87, T93, R104, and N114 together coordinate ATP. H117 functions as the Pros-phosphohistidine intermediate in the catalytic mechanism.

The protein belongs to the NDK family. As to quaternary structure, homotetramer. Requires Mg(2+) as cofactor.

It is found in the cytoplasm. The enzyme catalyses a 2'-deoxyribonucleoside 5'-diphosphate + ATP = a 2'-deoxyribonucleoside 5'-triphosphate + ADP. It carries out the reaction a ribonucleoside 5'-diphosphate + ATP = a ribonucleoside 5'-triphosphate + ADP. Functionally, major role in the synthesis of nucleoside triphosphates other than ATP. The ATP gamma phosphate is transferred to the NDP beta phosphate via a ping-pong mechanism, using a phosphorylated active-site intermediate. This is Nucleoside diphosphate kinase from Aeromonas salmonicida (strain A449).